Here is a 502-residue protein sequence, read N- to C-terminus: ATP synthase subunit alpha (502 aa).

Position 169–176 (169–176 (GDRATGKT)) interacts with ATP.

This sequence belongs to the ATPase alpha/beta chains family. F-type ATPases have 2 components, CF(1) - the catalytic core - and CF(0) - the membrane proton channel. CF(1) has five subunits: alpha(3), beta(3), gamma(1), delta(1), epsilon(1). CF(0) has three main subunits: a(1), b(2) and c(9-12). The alpha and beta chains form an alternating ring which encloses part of the gamma chain. CF(1) is attached to CF(0) by a central stalk formed by the gamma and epsilon chains, while a peripheral stalk is formed by the delta and b chains.

It is found in the cell inner membrane. The catalysed reaction is ATP + H2O + 4 H(+)(in) = ADP + phosphate + 5 H(+)(out). Functionally, produces ATP from ADP in the presence of a proton gradient across the membrane. The alpha chain is a regulatory subunit. The protein is ATP synthase subunit alpha of Hydrogenobaculum sp. (strain Y04AAS1).